An 84-amino-acid polypeptide reads, in one-letter code: Sec-independent protein translocase protein TatA (84 aa).

A helical transmembrane segment spans residues 1–21; that stretch reads MGGISIWQLLIIAVIVILLFG. The interval 40–84 is disordered; that stretch reads KKAMSDEDKPADKKDADFEPKNIEQQKTEASAETTAETKKDKEQA. Basic and acidic residues-rich tracts occupy residues 42–66 and 75–84; these read AMSD…EQQK and AETKKDKEQA.

This sequence belongs to the TatA/E family. The Tat system comprises two distinct complexes: a TatABC complex, containing multiple copies of TatA, TatB and TatC subunits, and a separate TatA complex, containing only TatA subunits. Substrates initially bind to the TatABC complex, which probably triggers association of the separate TatA complex to form the active translocon.

It is found in the cell inner membrane. Its function is as follows. Part of the twin-arginine translocation (Tat) system that transports large folded proteins containing a characteristic twin-arginine motif in their signal peptide across membranes. TatA could form the protein-conducting channel of the Tat system. The protein is Sec-independent protein translocase protein TatA of Vibrio atlanticus (strain LGP32) (Vibrio splendidus (strain Mel32)).